The sequence spans 552 residues: Oxygen-dependent choline dehydrogenase (552 aa).

Residue 7–36 (DYIIIGAGSAGNVLAARLTEDKDTTVLLLE) participates in FAD binding. His477 acts as the Proton acceptor in catalysis.

Belongs to the GMC oxidoreductase family. FAD is required as a cofactor.

It carries out the reaction choline + A = betaine aldehyde + AH2. The enzyme catalyses betaine aldehyde + NAD(+) + H2O = glycine betaine + NADH + 2 H(+). The protein operates within amine and polyamine biosynthesis; betaine biosynthesis via choline pathway; betaine aldehyde from choline (cytochrome c reductase route): step 1/1. In terms of biological role, involved in the biosynthesis of the osmoprotectant glycine betaine. Catalyzes the oxidation of choline to betaine aldehyde and betaine aldehyde to glycine betaine at the same rate. The polypeptide is Oxygen-dependent choline dehydrogenase (Acinetobacter baumannii (strain AB307-0294)).